The primary structure comprises 1047 residues: Probable sucrose-phosphate synthase 2 (1047 aa).

Positions 101-123 are enriched in basic and acidic residues; the sequence is EGKNAKREAKREREREKARREVT. A disordered region spans residues 101–153; it reads EGKNAKREAKREREREKARREVTAEMSEDFSEGEKADLPGEIPTPSDNNTKGR. Phosphoserine occurs at positions 127, 131, and 159. The interval 712–731 is disordered; sequence KSGSNNGVDTNLDAEDRAAE.

It belongs to the glycosyltransferase 1 family. Homodimer or homotetramer. As to expression, expressed in roots, cauline leaves, flower buds, flowers and anthers. Highly expressed in maturing nectaries.

The enzyme catalyses beta-D-fructose 6-phosphate + UDP-alpha-D-glucose = sucrose 6(F)-phosphate + UDP + H(+). The protein operates within glycan biosynthesis; sucrose biosynthesis; sucrose from D-fructose 6-phosphate and UDP-alpha-D-glucose: step 1/2. Its activity is regulated as follows. Activity is regulated by phosphorylation and moderated by concentration of metabolites and light. In terms of biological role, plays a role in photosynthetic sucrose synthesis by catalyzing the rate-limiting step of sucrose biosynthesis from UDP-glucose and fructose- 6-phosphate. Involved in the regulation of carbon partitioning in the leaves of plants. May regulate the synthesis of sucrose and therefore play a major role as a limiting factor in the export of photoassimilates out of the leaf. Plays a role for sucrose availability that is essential for plant growth and fiber elongation. Required for nectar secretion. The sequence is that of Probable sucrose-phosphate synthase 2 (SPS2) from Arabidopsis thaliana (Mouse-ear cress).